Here is a 264-residue protein sequence, read N- to C-terminus: Thymidylate synthase (264 aa).

R21 contributes to the dUMP binding site. H51 contacts (6R)-5,10-methylene-5,6,7,8-tetrahydrofolate. 126–127 serves as a coordination point for dUMP; sequence RR. Catalysis depends on C146, which acts as the Nucleophile. DUMP contacts are provided by residues 166–169, N177, and 207–209; these read RSCD and HLY. D169 is a (6R)-5,10-methylene-5,6,7,8-tetrahydrofolate binding site. A (6R)-5,10-methylene-5,6,7,8-tetrahydrofolate-binding site is contributed by A263.

The protein belongs to the thymidylate synthase family. Bacterial-type ThyA subfamily. In terms of assembly, homodimer.

The protein localises to the cytoplasm. The enzyme catalyses dUMP + (6R)-5,10-methylene-5,6,7,8-tetrahydrofolate = 7,8-dihydrofolate + dTMP. It functions in the pathway pyrimidine metabolism; dTTP biosynthesis. In terms of biological role, catalyzes the reductive methylation of 2'-deoxyuridine-5'-monophosphate (dUMP) to 2'-deoxythymidine-5'-monophosphate (dTMP) while utilizing 5,10-methylenetetrahydrofolate (mTHF) as the methyl donor and reductant in the reaction, yielding dihydrofolate (DHF) as a by-product. This enzymatic reaction provides an intracellular de novo source of dTMP, an essential precursor for DNA biosynthesis. This chain is Thymidylate synthase, found in Enterobacter sp. (strain 638).